The primary structure comprises 744 residues: Cell surface receptor daf-4 (744 aa).

The N-terminal stretch at Met-1–Thr-31 is a signal peptide. The Extracellular segment spans residues Trp-48–Gly-253. N-linked (GlcNAc...) asparagine glycosylation is found at Asn-60, Asn-134, and Asn-165. A helical membrane pass occupies residues Trp-254 to Met-274. The Cytoplasmic segment spans residues Glu-275–Thr-744. The Protein kinase domain maps to Ile-306–Ser-603. ATP contacts are provided by residues Ile-312–Val-320 and Lys-338. Residue Asp-440 is the Proton acceptor of the active site. Disordered stretches follow at residues Pro-605 to Glu-686 and Ala-724 to Thr-744. Residues Arg-620 to His-639 show a composition bias toward basic and acidic residues. Residues Ser-731–Thr-744 show a composition bias toward low complexity.

It belongs to the protein kinase superfamily. TKL Ser/Thr protein kinase family. TGFB receptor subfamily. As to quaternary structure, may interact with daf-1 to regulate dauer larva development. Interacts with sma-10. In terms of tissue distribution, pharynx, intestine, hypodermis and body wall muscles in L1 through to adult stages. Also expressed in head neurons, ventral cord and tail neurons. Subset of head neurons show coexpression with daf-1 when dauer/nondauer decision is made.

It localises to the cell membrane. It catalyses the reaction L-threonyl-[receptor-protein] + ATP = O-phospho-L-threonyl-[receptor-protein] + ADP + H(+). The enzyme catalyses L-seryl-[receptor-protein] + ATP = O-phospho-L-seryl-[receptor-protein] + ADP + H(+). Involved in a TGF-beta pathway. May be a receptor for TGF-beta-like ligand daf-7. Controls the decision of whether or not larvae enter a developmentally arrested state, known as dauer, in response to environmental conditions. Regulates body size and male tail patterning. Involved in regulating entry into quiescence triggered by satiety. Involved in sensitivity to CO2 levels. In Caenorhabditis elegans, this protein is Cell surface receptor daf-4.